A 146-amino-acid chain; its full sequence is MKLHELKAAEGSRRVRNRVGRGAGSGNGKTSGRGQKGQKARSGGGVRPGFEGGQLPLFRRLPKRGFTNINRKEYAIVNLDQLNKFEDGTEVTPALLVETGVVKNEKSGIKVLGNGSLDKKLTVKAHKFSASAVEAIDAKGGAHEVI.

Basic and acidic residues predominate over residues 1–13 (MKLHELKAAEGSR). The interval 1 to 56 (MKLHELKAAEGSRRVRNRVGRGAGSGNGKTSGRGQKGQKARSGGGVRPGFEGGQLP) is disordered. Composition is skewed to gly residues over residues 21–35 (RGAG…GRGQ) and 42–52 (SGGGVRPGFEG).

Belongs to the universal ribosomal protein uL15 family. In terms of assembly, part of the 50S ribosomal subunit.

Functionally, binds to the 23S rRNA. The polypeptide is Large ribosomal subunit protein uL15 (Staphylococcus haemolyticus (strain JCSC1435)).